The primary structure comprises 193 residues: Ion-translocating oxidoreductase complex subunit B (193 aa).

Residues 1–23 (MTFLFIVITLLALIFGAILGFAS) form a hydrophobic region. The 4Fe-4S domain occupies 29-87 (EADPVVEKIDAILPQSQCGQCGYPGCKPYAEAICNGDEITKCIPGGQTTIVKIAEILGV). Residues cysteine 46, cysteine 49, cysteine 54, cysteine 70, cysteine 110, cysteine 113, cysteine 116, cysteine 120, cysteine 140, cysteine 143, cysteine 146, and cysteine 150 each coordinate [4Fe-4S] cluster. 4Fe-4S ferredoxin-type domains lie at 101 to 130 (KVAF…GTNK) and 131 to 160 (AMHT…MIPV).

Belongs to the 4Fe4S bacterial-type ferredoxin family. RnfB subfamily. As to quaternary structure, the complex is composed of six subunits: RnfA, RnfB, RnfC, RnfD, RnfE and RnfG. Requires [4Fe-4S] cluster as cofactor.

The protein localises to the cell inner membrane. Its function is as follows. Part of a membrane-bound complex that couples electron transfer with translocation of ions across the membrane. The chain is Ion-translocating oxidoreductase complex subunit B from Haemophilus influenzae (strain 86-028NP).